We begin with the raw amino-acid sequence, 87 residues long: Large ribosomal subunit protein bL27 (87 aa).

The tract at residues 1 to 21 (MAHKKAGGSSRNGRDSESKRL) is disordered.

The protein belongs to the bacterial ribosomal protein bL27 family.

The protein is Large ribosomal subunit protein bL27 of Burkholderia multivorans (strain ATCC 17616 / 249).